Here is a 225-residue protein sequence, read N- to C-terminus: Membrane protein (225 aa).

Residues 1–20 (MDNTTNCTLGTEQAVQLFKE) lie on the Virion surface side of the membrane. The chain crosses the membrane as a helical span at residues 21–41 (YNLFVTAFLLFLTILLQYGYA). At 42–51 (TRNKVIYILK) the chain is on the intravirion side. The helical transmembrane segment at 52–72 (MIVLWCFWPLNIAVGAISCIY) threads the bilayer. At 73–77 (PPNTG) the chain is on the virion surface side. A helical membrane pass occupies residues 78–98 (GLVAAIILTVFACLSFIGYWI). Topologically, residues 99-225 (QSFRLFKRCR…VATGGSSLYT (127 aa)) are intravirion.

This sequence belongs to the gammacoronaviruses M protein family. As to quaternary structure, homomultimer. Interacts with envelope E protein in the budding compartment of the host cell, which is located between endoplasmic reticulum and the Golgi complex. Forms a complex with HE and S proteins. Interacts with nucleocapsid N protein. This interaction probably participates in RNA packaging into the virus.

It localises to the virion membrane. The protein localises to the host Golgi apparatus membrane. Its function is as follows. Component of the viral envelope that plays a central role in virus morphogenesis and assembly via its interactions with other viral proteins. The chain is Membrane protein from Avian infectious bronchitis virus (strain 6/82) (IBV).